The primary structure comprises 553 residues: Hyaluronan synthase 3 (553 aa).

Residues 1–15 lie on the Cytoplasmic side of the membrane; that stretch reads MPVQLTTALRVVGTS. The helical transmembrane segment at 16-36 threads the bilayer; it reads LFALAVLGGILAAYVTGYQFI. The Extracellular portion of the chain corresponds to 37–44; the sequence is HTEKHYLS. Residues 45 to 65 traverse the membrane as a helical segment; sequence FGLYGAILGLHLLIQSLFAFL. Topologically, residues 66–377 are cytoplasmic; it reads EHRRMRRAGQ…NSLWFHKHHL (312 aa). Residues 378–398 traverse the membrane as a helical segment; the sequence is WMTYESVVTGFFPFFLIATVI. Over 399–408 the chain is Extracellular; that stretch reads QLFYRGRIWN. Residues 409-429 form a helical membrane-spanning segment; that stretch reads ILLFLLTVQLVGIIKATYACF. Over 430-440 the chain is Cytoplasmic; it reads LRGNAEMIFMS. Residues 441-461 form a helical membrane-spanning segment; the sequence is LYSLLYMSSLLPAKIFAIATI. The N-linked (GlcNAc...) asparagine glycan is linked to Asn-462. The Extracellular portion of the chain corresponds to 462 to 473; it reads NKSGWGTSGRKT. A helical membrane pass occupies residues 474–494; that stretch reads IVVNFIGLIPVSIWVAVLLGG. At 495-515 the chain is on the cytoplasmic side; it reads LAYTAYCQDLFSETELAFLVS. Residues 516-536 traverse the membrane as a helical segment; it reads GAILYGCYWVALLMLYLAIIA. The Extracellular portion of the chain corresponds to 537–553; it reads RRCGKKPEQYSLAFAEV.

It belongs to the NodC/HAS family. In terms of assembly, homodimers. Forms heterodimers with HAS2 and HAS1. It depends on Mg(2+) as a cofactor. Post-translationally, O-GlcNAcylation increases the hyaluronan synthase activity, HAS3 stability and its plasma membrane residence. The concentration of UDP-GlcNAc controls the level of O-GlcNAc modification.

Its subcellular location is the cell membrane. It localises to the golgi apparatus membrane. It is found in the golgi apparatus. The protein localises to the trans-Golgi network membrane. The protein resides in the early endosome. The enzyme catalyses [hyaluronan](n) + UDP-N-acetyl-alpha-D-glucosamine = N-acetyl-beta-D-glucosaminyl-(1-&gt;4)-[hyaluronan](n) + UDP + H(+). It carries out the reaction N-acetyl-beta-D-glucosaminyl-(1-&gt;4)-[hyaluronan](n) + UDP-alpha-D-glucuronate = [hyaluronan](n+1) + UDP + H(+). Its pathway is glycan biosynthesis; hyaluronan biosynthesis. Its activity is regulated as follows. The enzymatic activity depends on the availability of cytosolic levels of UDP-GlcUA and UDP-GlcNAc. In terms of biological role, catalyzes the addition of GlcNAc or GlcUA monosaccharides to the nascent hyaluronan polymer. Therefore, it is essential to hyaluronan synthesis a major component of most extracellular matrices that has a structural role in tissues architectures and regulates cell adhesion, migration and differentiation. This is one of three isoenzymes responsible for cellular hyaluronan synthesis. The chain is Hyaluronan synthase 3 from Homo sapiens (Human).